The primary structure comprises 622 residues: Phosphoenolpyruvate carboxykinase [GTP] (622 aa).

Residues arginine 86 and 220–222 (YGG) each bind substrate. Mn(2+)-binding residues include lysine 229 and histidine 248. Serine 270 contributes to the substrate binding site. 271-276 (MCGKTS) is a GTP binding site. The active site involves cysteine 272. Aspartate 289 serves as a coordination point for Mn(2+). The segment covering 360-374 (ENHSGKWWRGKKDSE) has biased composition (basic and acidic residues). Positions 360 to 381 (ENHSGKWWRGKKDSEGNEISPS) are disordered. Residue 384-386 (NAR) participates in substrate binding. GTP-binding residues include arginine 386 and arginine 418.

Belongs to the phosphoenolpyruvate carboxykinase [GTP] family. The cofactor is Mn(2+).

The protein localises to the cytoplasm. It carries out the reaction oxaloacetate + GTP = phosphoenolpyruvate + GDP + CO2. Its pathway is carbohydrate biosynthesis; gluconeogenesis. Catalyzes the conversion of oxaloacetate (OAA) to phosphoenolpyruvate (PEP), the rate-limiting step in the metabolic pathway that produces glucose from lactate and other precursors derived from the citric acid cycle. This is Phosphoenolpyruvate carboxykinase [GTP] from Thermococcus sibiricus (strain DSM 12597 / MM 739).